A 1245-amino-acid polypeptide reads, in one-letter code: Structural polyprotein (1245 aa).

The interval 1 to 106 (MNRGFFNMLG…KPKPGKRQRM (106 aa)) is disordered. The interval 37–70 (GLASQIQQLTTAVSALVIGQATRPQPPRPRPPPR) is host transcription inhibition. Residues 38 to 49 (LASQIQQLTTAV) are compositionally biased toward polar residues. A Nuclear localization signal motif is present at residues 63–100 (PRPRPPPRQKKQAPKQPPKPKKPKTQEKKKKQPAKPKP). Basic residues predominate over residues 67–106 (PPPRQKKQAPKQPPKPKKPKTQEKKKKQPAKPKPGKRQRM). The binding to the viral RNA stretch occupies residues 86-115 (KTQEKKKKQPAKPKPGKRQRMALKLEADRL). The ribosome-binding stretch occupies residues 100 to 114 (PGKRQRMALKLEADR). A Peptidase S3 domain is found at 114-264 (RLFDVKNEDG…KTTPEGTEEW (151 aa)). The active-site Charge relay system is the His-141. Positions 146 to 156 (IDHPVLSKLKF) match the Nuclear export signal motif. The segment at 157 to 162 (TKSSAY) is interaction with spike glycoprotein E2. Asp-163 (charge relay system) is an active-site residue. Residues 185 to 195 (PEGFYNWHHGA) form a dimerization of the capsid protein region. Ser-215 (charge relay system) is an active-site residue. Positions 221-225 (DNSGR) are dimerization of the capsid protein. The segment at 249–253 (SKGKT) is interaction with spike glycoprotein E2. The interval 265 to 279 (SAAPLVTAMCLLGNV) is functions as an uncleaved signal peptide for the precursor of protein E3/E2. N-linked (GlcNAc...) asparagine; by host glycosylation occurs at Asn-278. Disulfide bonds link Cys-283/Cys-289, Cys-480/Cys-594, Cys-529/Cys-554, and Cys-531/Cys-548. Over 329 to 690 (SVIDDFTLTS…HEIVQHYYHR (362 aa)) the chain is Extracellular. Asn-524 carries N-linked (GlcNAc...) asparagine; by host glycosylation. An N-linked (GlcNAc...) asparagine; by host glycan is attached at Asn-646. Residues 682-730 (EIVQHYYHRHPVYTILAVASATVAMMIGVTVAVLCACKARRECLTPYAL) adopt a coiled-coil conformation. A helical membrane pass occupies residues 691–718 (HPVYTILAVASATVAMMIGVTVAVLCAC). The segment at 719 to 723 (KARRE) is interaction with the capsid protein. At 719–751 (KARRECLTPYALAPNAVIPTSLALLCCVRSANA) the chain is on the cytoplasmic side. Residues Cys-724, Cys-744, and Cys-745 are each lipidated (S-palmitoyl cysteine; by host). A disulfide bond links Cys-724 and Cys-745. At 752–763 (ETFTETMSYLWS) the chain is on the extracellular side. Residues 764-784 (NSQPFFWVQLCIPLAAFIVLM) traverse the membrane as a helical segment. Arg-785 is a topological domain (cytoplasmic). The chain crosses the membrane as a helical span at residues 786–806 (CCSCCLPFLVVAGAYLAKVDA). Residues 807–1214 (YEHATTVPNV…QAAISKTSWS (408 aa)) lie on the Extracellular side of the membrane. Disulfide bonds link Cys-855–Cys-920, Cys-868–Cys-900, Cys-869–Cys-902, and Cys-874–Cys-884. Positions 890-907 (VYPFMWGGAQCFCDSENS) are E1 fusion peptide loop. N-linked (GlcNAc...) asparagine; by host glycosylation is found at Asn-945 and Asn-1051. 4 disulfide bridges follow: Cys-1065–Cys-1077, Cys-1107–Cys-1182, Cys-1112–Cys-1186, and Cys-1134–Cys-1176. Positions 1196 to 1245 (TPHKNDQEFQAAISKTSWSWLFALFGGASSLLIIGLMIFACSMMLTSTRR) form a coiled coil. Residues 1215-1239 (WLFALFGGASSLLIIGLMIFACSMM) form a helical membrane-spanning segment. At 1240–1245 (LTSTRR) the chain is on the cytoplasmic side.

It belongs to the alphavirus structural polyprotein family. As to quaternary structure, homomultimer. Interacts with host karyopherin KPNA4; this interaction allows the nuclear import of the viral capsid protein. Interacts with spike glycoprotein E2. Interacts with host IRAK1; the interaction leads to inhibition of IRAK1-dependent signaling. The precursor of protein E3/E2 and E1 form a heterodimer shortly after synthesis. In terms of assembly, the precursor of protein E3/E2 and E1 form a heterodimer shortly after synthesis. Processing of the precursor of protein E3/E2 into E2 and E3 results in a heterodimer of the spike glycoproteins E2 and E1. Spike at virion surface are constituted of a trimer of E2-E1 heterodimers. After target cell attachment and endocytosis, E1 change conformation to form homotrimers. E2-E1 heterodimers interact with host VLDLR or LRP8/APOER2 to mediate viral entry. Interacts with 6K protein. As to quaternary structure, interacts with spike glycoprotein E1. Processing of the precursor of protein E3/E2 into E2 and E3 results in a heterodimer of the spike glycoproteins E2 and E1. Spike at virion surface are constituted of a trimer of E2-E1 heterodimers. E2-E1 heterodimers interact with host VLDLR or LRP8/APOER2 to mediate viral entry. Interacts with 6K protein. Interacts with the capsid protein. Oligomer. Interacts with spike glycoprotein E1. Interacts with spike glycoprotein E2. Specific enzymatic cleavages in vivo yield mature proteins. Capsid protein is auto-cleaved during polyprotein translation, unmasking a signal peptide at the N-terminus of the precursor of E3/E2. The remaining polyprotein is then targeted to the host endoplasmic reticulum, where host signal peptidase cleaves it into pE2, 6K and E1 proteins. pE2 is further processed to mature E3 and E2 by host furin in trans-Golgi vesicle. In terms of processing, palmitoylated via thioester bonds. These palmitoylations may induce disruption of the C-terminus transmembrane. This would result in the reorientation of E2 C-terminus from lumenal to cytoplasmic side. Post-translationally, N-glycosylated. Palmitoylated via thioester bonds.

It localises to the virion. The protein resides in the host cytoplasm. Its subcellular location is the host cell membrane. It is found in the host nucleus. The protein localises to the virion membrane. It localises to the host Golgi apparatus. The protein resides in the host trans-Golgi network. Its subcellular location is the host endoplasmic reticulum. It carries out the reaction Autocatalytic release of the core protein from the N-terminus of the togavirus structural polyprotein by hydrolysis of a -Trp-|-Ser- bond.. With respect to regulation, the channel activity is blocked by 5-N, N-Hexamethylene amiloride. Functionally, forms an icosahedral capsid with a T=4 symmetry composed of 240 copies of the capsid protein surrounded by a lipid membrane through which penetrate 80 spikes composed of trimers of E1-E2 heterodimers. The capsid protein binds to the viral RNA genome at a site adjacent to a ribosome binding site for viral genome translation following genome release. Possesses a protease activity that results in its autocatalytic cleavage from the nascent structural protein. Following its self-cleavage, the capsid protein transiently associates with ribosomes, and within several minutes the protein binds to viral RNA and rapidly assembles into icosahedric core particles. The resulting nucleocapsid eventually associates with the cytoplasmic domain of the spike glycoprotein E2 at the cell membrane, leading to budding and formation of mature virions. In case of infection, new virions attach to target cells and after clathrin-mediated endocytosis their membrane fuses with the host endosomal membrane. This leads to the release of the nucleocapsid into the cytoplasm, followed by an uncoating event necessary for the genomic RNA to become accessible. The uncoating might be triggered by the interaction of capsid proteins with ribosomes. Binding of ribosomes would release the genomic RNA since the same region is genomic RNA-binding and ribosome-binding. Specifically inhibits interleukin-1 receptor-associated kinase 1/IRAK1-dependent signaling during viral entry, representing a means by which the alphaviruses may evade innate immune detection and activation prior to viral gene expression. Provides the signal sequence for the translocation of the precursor of protein E3/E2 to the host endoplasmic reticulum. Furin-cleaved E3 remains associated with spike glycoprotein E1 and mediates pH protection of the latter during the transport via the secretory pathway. After virion release from the host cell, the assembly protein E3 is gradually released in the extracellular space. Its function is as follows. Plays a role in viral attachment to target host cell, by binding to the cell receptors VLDLR or LRP8/APOER2. Synthesized as a pE2 precursor which is processed by furin at the cell membrane just before virion budding, giving rise to E2-E1 heterodimer. The pE2-E1 heterodimer is stable, whereas E2-E1 is unstable and dissociate at low pH. pE2 is processed at the last step, presumably to avoid E1 fusion activation before its final export to cell surface. E2 C-terminus contains a transitory transmembrane that would be disrupted by palmitoylation, resulting in reorientation of the C-terminal tail from lumenal to cytoplasmic side. This step is critical since E2 C-terminus is involved in budding by interacting with capsid proteins. This release of E2 C-terminus in cytoplasm occurs lately in protein export, and precludes premature assembly of particles at the endoplasmic reticulum membrane. In terms of biological role, acts as a viroporin that participates in virus glycoprotein processing and transport to the plasma membrane, cell permeabilization and budding of viral particles. Disrupts the calcium homeostasis of the cell, probably at the endoplasmic reticulum level resulting in the increased levels of cytoplasmic calcium. Because of its lipophilic properties, the 6K protein is postulated to influence the selection of lipids that interact with the transmembrane domains of the glycoproteins, which, in turn, affects the deformability of the bilayer required for the extreme curvature that occurs as budding proceeds. Present in low amount in virions, about 3% compared to viral glycoproteins. Functionally, class II viral fusion protein. Fusion activity is inactive as long as E1 is bound to E2 in mature virion. After virus attachment to target cell via host VLDLR or LRP8/APOER2 and endocytosis, acidification of the endosome induces dissociation of E1/E2 heterodimer and concomitant trimerization of the E1 subunits. This E1 trimer is fusion active, and promotes release of viral nucleocapsid in cytoplasm after endosome and viral membrane fusion. Efficient fusion requires the presence of cholesterol and sphingolipid in the target membrane. The chain is Structural polyprotein from Acrocephalus scirpaceus (Eurasian reed-warbler).